We begin with the raw amino-acid sequence, 542 residues long: Aminotriazole resistance protein (542 aa).

The Cytoplasmic segment spans residues 1–108 (MGNQSLVVLT…SFGSEGNSKS (108 aa)). Residues 109–129 (WLMASFPLVSGSFILISGRLG) form a helical membrane-spanning segment. At 130 to 136 (DIYGLKK) the chain is on the extracellular side. Residues 137 to 157 (MLLVGYVLVIIWSLICGITKY) form a helical membrane-spanning segment. Residues 158 to 172 (SGSDTFFIISRAFQG) are Cytoplasmic-facing. The chain crosses the membrane as a helical span at residues 173–193 (LGIAFVLPNVLGIIGNIYVGG). Over 194–198 (TFRKN) the chain is Extracellular. The helical transmembrane segment at 199-219 (IVISFVGAMAPIGATLGCLFA) threads the bilayer. The Cytoplasmic portion of the chain corresponds to 220–231 (GLIGTEDPKQWP). Residues 232-252 (WAFYAYSIAAFINFVLSIYAI) form a helical membrane-spanning segment. The Extracellular portion of the chain corresponds to 253–262 (PSTIPTNIHH). A helical membrane pass occupies residues 263–283 (FSMDWIGSVLGVIGLILLNFV). Topologically, residues 284–295 (WNQAPISGWNQA) are cytoplasmic. Residues 296-316 (YIIVILIISVIFLVVFIIYEI) form a helical membrane-spanning segment. The Extracellular segment spans residues 317–333 (RFAKTPLLPRAVIKDRH). A helical transmembrane segment spans residues 334–354 (MIQIMLALFFGWGSFGIFTFY). Topologically, residues 355–371 (YFQFQLNIRQYTALWAG) are cytoplasmic. Residues 372–392 (GTYFMFLIWGIIAALLVGFTI) traverse the membrane as a helical segment. The Extracellular segment spans residues 393 to 399 (KNVSPSV). A helical transmembrane segment spans residues 400–420 (FLFFSMVAFNVGSIMASVTPV). Topologically, residues 421 to 429 (HETYFRTQL) are cytoplasmic. Residues 430 to 450 (GTMIILSFGMDLSFPASSIIF) form a helical membrane-spanning segment. The Extracellular segment spans residues 451-505 (SDNLPMEYQGMAGSLVNTVVNYSMSLCLGMGATVETQVNSDGKHLLKGYRGAQYL). Residue asparagine 471 is glycosylated (N-linked (GlcNAc...) asparagine). A helical membrane pass occupies residues 506–526 (GIGLASLACMISGLYMVESFI). Topologically, residues 527–542 (KGRRARAAAEYDCTVA) are cytoplasmic.

It belongs to the major facilitator superfamily.

The protein resides in the membrane. Functionally, putative component of the machinery responsible for pumping aminotriazole (and possibly other toxic compounds) out of the cell. Probable ATP-dependent export permease. Appears to confer resistance only to aminotriazole. In Saccharomyces cerevisiae (strain ATCC 204508 / S288c) (Baker's yeast), this protein is Aminotriazole resistance protein (ATR1).